The sequence spans 131 residues: Ribosome-binding factor A (131 aa).

It belongs to the RbfA family. As to quaternary structure, monomer. Binds 30S ribosomal subunits, but not 50S ribosomal subunits or 70S ribosomes.

The protein localises to the cytoplasm. One of several proteins that assist in the late maturation steps of the functional core of the 30S ribosomal subunit. Associates with free 30S ribosomal subunits (but not with 30S subunits that are part of 70S ribosomes or polysomes). Required for efficient processing of 16S rRNA. May interact with the 5'-terminal helix region of 16S rRNA. This chain is Ribosome-binding factor A, found in Mannheimia succiniciproducens (strain KCTC 0769BP / MBEL55E).